The sequence spans 344 residues: Heat-inducible transcription repressor HrcA (344 aa).

It belongs to the HrcA family.

Its function is as follows. Negative regulator of class I heat shock genes (grpE-dnaK-dnaJ and groELS operons). Prevents heat-shock induction of these operons. This Aster yellows witches'-broom phytoplasma (strain AYWB) protein is Heat-inducible transcription repressor HrcA.